The sequence spans 381 residues: cAMP-dependent protein kinase type I-alpha regulatory subunit (381 aa).

Methionine 1 carries the post-translational modification N-acetylmethionine. The interval 1 to 135 is dimerization and phosphorylation; sequence MESGSTAASE…AALAKAIEKN (135 aa). Serine 3 carries the post-translational modification Phosphoserine. Residues 64 to 96 form a disordered region; it reads QIQNLQKAGTRTDSREDEISPPPPNPVVKGRRR. The residue at position 75 (threonine 75) is a Phosphothreonine. A phosphoserine mark is found at serine 77 and serine 83. Residues 96-100 carry the Pseudophosphorylation motif motif; it reads RRGAI. The residue at position 101 (serine 101) is a Phosphoserine. 3',5'-cyclic AMP-binding positions include 137 to 254, glutamate 202, arginine 211, 255 to 381, glutamate 326, and arginine 335; these read LFSH…SKVS and ILES…SLSV. The residue at position 258 (serine 258) is a Phosphoserine.

The protein belongs to the cAMP-dependent kinase regulatory chain family. As to quaternary structure, the inactive holoenzyme is composed of two regulatory chains and two catalytic chains. Activation by cAMP releases the two active catalytic monomers and the regulatory dimer. Interacts with PRKACA and PRKACB. PRKAR1A also interacts with RFC2; the complex may be involved in cell survival. Interacts with AKAP4. Interacts with RARA; the interaction occurs in the presence of cAMP or FSH and regulates RARA transcriptional activity. Interacts with the phosphorylated form of PJA2. Interacts with CBFA2T3. Interacts with PRKX; regulates this cAMP-dependent protein kinase. Interacts with smAKAP; this interaction may target PRKAR1A to the plasma membrane. Interacts with AICDA. The pseudophosphorylation site binds to the substrate-binding region of the catalytic chain, resulting in the inhibition of its activity.

It localises to the cell membrane. Regulatory subunit of the cAMP-dependent protein kinases involved in cAMP signaling in cells. This is cAMP-dependent protein kinase type I-alpha regulatory subunit (PRKAR1A) from Pongo abelii (Sumatran orangutan).